The primary structure comprises 375 residues: Trichodiene synthase (375 aa).

This sequence belongs to the trichodiene synthase family.

It carries out the reaction (2E,6E)-farnesyl diphosphate = trichodiene + diphosphate. It participates in sesquiterpene biosynthesis; trichothecene biosynthesis. In terms of biological role, TS is a member of the terpene cyclase group of enzymes. It catalyzes the isomerization and cyclization of farnesyl pyro-phosphate to form trichodiene, the first cyclic intermediate in the biosynthetic pathway for trichothecenes. It serves to branch trichothecene biosynthesis from the isoprenoid pathway. This is Trichodiene synthase (TRI5) from Fusarium cortaderiae.